Here is a 263-residue protein sequence, read N- to C-terminus: GTP cyclohydrolase 1 type 2 homolog (263 aa).

A divalent metal cation-binding residues include His76, His77, Asp113, His231, and Glu235.

This sequence belongs to the GTP cyclohydrolase I type 2/NIF3 family. In terms of assembly, homohexamer.

This is GTP cyclohydrolase 1 type 2 homolog from Deinococcus radiodurans (strain ATCC 13939 / DSM 20539 / JCM 16871 / CCUG 27074 / LMG 4051 / NBRC 15346 / NCIMB 9279 / VKM B-1422 / R1).